The following is an 891-amino-acid chain: DNA mismatch repair protein MutS (891 aa).

617-624 (GPNMSGKS) is a binding site for ATP. A compositionally biased stretch (basic and acidic residues) spans 805 to 827 (REKIEEEEPKTKDTKRGPSEKVK). Positions 805 to 840 (REKIEEEEPKTKDTKRGPSEKVKNASPTLPRDEKGR) are disordered.

Belongs to the DNA mismatch repair MutS family.

Functionally, this protein is involved in the repair of mismatches in DNA. It is possible that it carries out the mismatch recognition step. This protein has a weak ATPase activity. This chain is DNA mismatch repair protein MutS, found in Porphyromonas gingivalis (strain ATCC BAA-308 / W83).